We begin with the raw amino-acid sequence, 285 residues long: V-type proton ATPase subunit D (285 aa).

A compositionally biased stretch (basic and acidic residues) spans 208–226; it reads QKTKENAEKADSVTKEEHQ. The disordered stretch occupies residues 208–285; that stretch reads QKTKENAEKA…ENDSDEEVIF (78 aa). Serine 219 is modified (phosphoserine). Positions 227–236 are enriched in polar residues; that stretch reads GGSNTLQQTK. A compositionally biased stretch (basic and acidic residues) spans 248–263; it reads VGKEVINEVENSKDDT. Over residues 271–285 the composition is skewed to acidic residues; that stretch reads TDDEEENDSDEEVIF.

The protein belongs to the V-ATPase D subunit family. As to quaternary structure, V-ATPase is a heteromultimeric enzyme composed of a peripheral catalytic V1 complex (components A to H) attached to an integral membrane V0 proton pore complex (components: a, c, c', c'', d, e, f and VOA1).

It localises to the vacuole membrane. Subunit of the V1 complex of vacuolar(H+)-ATPase (V-ATPase), a multisubunit enzyme composed of a peripheral complex (V1) that hydrolyzes ATP and a membrane integral complex (V0) that translocates protons. V-ATPase is responsible for acidifying and maintaining the pH of intracellular compartments. This chain is V-type proton ATPase subunit D (vma8), found in Schizosaccharomyces pombe (strain 972 / ATCC 24843) (Fission yeast).